The following is a 353-amino-acid chain: 3-dehydroquinate synthase (353 aa).

Residues 60 to 65, 94 to 98, 118 to 119, K131, and K140 contribute to the NAD(+) site; these read AGDMNK, GMITD, and TT. E173, H234, and H253 together coordinate Zn(2+).

This sequence belongs to the sugar phosphate cyclases superfamily. Dehydroquinate synthase family. The cofactor is NAD(+). Co(2+) is required as a cofactor. Zn(2+) serves as cofactor.

The protein localises to the cytoplasm. It carries out the reaction 7-phospho-2-dehydro-3-deoxy-D-arabino-heptonate = 3-dehydroquinate + phosphate. It participates in metabolic intermediate biosynthesis; chorismate biosynthesis; chorismate from D-erythrose 4-phosphate and phosphoenolpyruvate: step 2/7. Functionally, catalyzes the conversion of 3-deoxy-D-arabino-heptulosonate 7-phosphate (DAHP) to dehydroquinate (DHQ). The sequence is that of 3-dehydroquinate synthase from Parabacteroides distasonis (strain ATCC 8503 / DSM 20701 / CIP 104284 / JCM 5825 / NCTC 11152).